A 202-amino-acid polypeptide reads, in one-letter code: Diadenylate cyclase (202 aa).

The chain crosses the membrane as a helical span at residues 6-26 (VFSVIILVLLFLILALTLLFV). A DAC domain is found at 29 to 185 (NKRTRSFVIR…RGVIKTLSSN (157 aa)).

This sequence belongs to the adenylate cyclase family. DacB/CdaS subfamily. In terms of assembly, probably oligomerizes.

Its subcellular location is the cell membrane. It catalyses the reaction 2 ATP = 3',3'-c-di-AMP + 2 diphosphate. Its function is as follows. Catalyzes the condensation of 2 ATP molecules into cyclic di-AMP (c-di-AMP), a second messenger used to regulate differing processes in different bacteria. This is Diadenylate cyclase from Mycoplasma pneumoniae (strain ATCC 29342 / M129 / Subtype 1) (Mycoplasmoides pneumoniae).